A 379-amino-acid polypeptide reads, in one-letter code: Queuine tRNA-ribosyltransferase (379 aa).

The active-site Proton acceptor is Asp-94. Residues Asp-94 to Phe-98, Asp-148, Gln-191, and Gly-218 contribute to the substrate site. Positions Gly-249–Ala-255 are RNA binding. Asp-268 acts as the Nucleophile in catalysis. The segment at Thr-273 to Arg-277 is RNA binding; important for wobble base 34 recognition. The Zn(2+) site is built by Cys-306, Cys-308, Cys-311, and His-337.

This sequence belongs to the queuine tRNA-ribosyltransferase family. Homodimer. Within each dimer, one monomer is responsible for RNA recognition and catalysis, while the other monomer binds to the replacement base PreQ1. The cofactor is Zn(2+).

The catalysed reaction is 7-aminomethyl-7-carbaguanine + guanosine(34) in tRNA = 7-aminomethyl-7-carbaguanosine(34) in tRNA + guanine. It participates in tRNA modification; tRNA-queuosine biosynthesis. In terms of biological role, catalyzes the base-exchange of a guanine (G) residue with the queuine precursor 7-aminomethyl-7-deazaguanine (PreQ1) at position 34 (anticodon wobble position) in tRNAs with GU(N) anticodons (tRNA-Asp, -Asn, -His and -Tyr). Catalysis occurs through a double-displacement mechanism. The nucleophile active site attacks the C1' of nucleotide 34 to detach the guanine base from the RNA, forming a covalent enzyme-RNA intermediate. The proton acceptor active site deprotonates the incoming PreQ1, allowing a nucleophilic attack on the C1' of the ribose to form the product. After dissociation, two additional enzymatic reactions on the tRNA convert PreQ1 to queuine (Q), resulting in the hypermodified nucleoside queuosine (7-(((4,5-cis-dihydroxy-2-cyclopenten-1-yl)amino)methyl)-7-deazaguanosine). The polypeptide is Queuine tRNA-ribosyltransferase (Oceanobacillus iheyensis (strain DSM 14371 / CIP 107618 / JCM 11309 / KCTC 3954 / HTE831)).